Here is a 165-residue protein sequence, read N- to C-terminus: Type 3 secretion system regulator YopR (165 aa).

This sequence belongs to the YopR family.

The protein resides in the secreted. May be involved in the regulation of the assembly of the type III secretion system (T3SS), also called injectisome, which is used to inject bacterial effector proteins into eukaryotic host cells. May control the secretion and/or polymerization of YscF/SctF, the principal component of the needle filament, thereby impacting the assembly of the T3SS. Involved in pathogenesis. This is Type 3 secretion system regulator YopR from Yersinia pseudotuberculosis serotype I (strain IP32953).